The following is a 221-amino-acid chain: Protein RER1D (221 aa).

The next 4 helical transmembrane spans lie at 41–58 (IVRR…YIYR), 64–84 (GYFV…IGFL), 128–148 (FVVA…FWPI), and 149–169 (LLCY…VHMF). The segment at 200–221 (KGDGGDDRPSSSNSSQGNEKQD) is disordered. Positions 209–221 (SSSNSSQGNEKQD) are enriched in polar residues.

This sequence belongs to the RER1 family.

Its subcellular location is the membrane. In terms of biological role, involved in the retrieval of endoplasmic reticulum membrane proteins from the early Golgi compartment. This Arabidopsis thaliana (Mouse-ear cress) protein is Protein RER1D.